The chain runs to 398 residues: Glia-derived nexin (398 aa).

Positions 1–19 (MNWHLPLFLLASVTLPSIC) are cleaved as a signal peptide. N-linked (GlcNAc...) asparagine glycosylation is found at N118 and N159.

It belongs to the serpin family.

It is found in the secreted. It localises to the extracellular space. Serine protease inhibitor with activity toward thrombin, trypsin, and urokinase. Promotes neurite extension by inhibiting thrombin. Binds heparin. The sequence is that of Glia-derived nexin (SERPINE2) from Homo sapiens (Human).